A 215-amino-acid polypeptide reads, in one-letter code: Probable phosphoglycerate mutase GpmB (215 aa).

Substrate-binding positions include 8–15 (RHGETQWN), 21–22 (QG), Arg58, Arg60, 82–85 (ELNM), 104–105 (RR), and 151–152 (GI). The active-site Tele-phosphohistidine intermediate is the His9. Glu82 acts as the Proton donor/acceptor in catalysis.

The protein belongs to the phosphoglycerate mutase family. GpmB subfamily.

It catalyses the reaction (2R)-2-phosphoglycerate = (2R)-3-phosphoglycerate. It participates in carbohydrate degradation; glycolysis; pyruvate from D-glyceraldehyde 3-phosphate: step 3/5. The protein is Probable phosphoglycerate mutase GpmB of Escherichia coli O1:K1 / APEC.